Reading from the N-terminus, the 170-residue chain is Group 2 truncated hemoglobin 3-1 (170 aa).

Position 98 (H98) interacts with heme b.

Belongs to the truncated hemoglobin family. Group II subfamily. In terms of assembly, homodimer when ferric.

Its function is as follows. Hemoglobin-like protein that exhibits an unusual concentration-independent binding of O(2) and CO. Required for general plant development and during nodulation. May promote shoot organogenesis from root explants. This Medicago truncatula (Barrel medic) protein is Group 2 truncated hemoglobin 3-1.